The sequence spans 868 residues: DNA mismatch repair protein MutS (868 aa).

620–627 (GPNMGGKS) lines the ATP pocket.

It belongs to the DNA mismatch repair MutS family.

This protein is involved in the repair of mismatches in DNA. It is possible that it carries out the mismatch recognition step. This protein has a weak ATPase activity. The protein is DNA mismatch repair protein MutS of Desulforamulus reducens (strain ATCC BAA-1160 / DSM 100696 / MI-1) (Desulfotomaculum reducens).